Here is a 93-residue protein sequence, read N- to C-terminus: Small ribosomal subunit protein uS19 (93 aa).

The protein belongs to the universal ribosomal protein uS19 family.

Functionally, protein S19 forms a complex with S13 that binds strongly to the 16S ribosomal RNA. The sequence is that of Small ribosomal subunit protein uS19 from Citrifermentans bemidjiense (strain ATCC BAA-1014 / DSM 16622 / JCM 12645 / Bem) (Geobacter bemidjiensis).